We begin with the raw amino-acid sequence, 398 residues long: Elongation factor Tu (398 aa).

The region spanning 10–207 is the tr-type G domain; sequence KPHVNIGTIG…TVDEYIPEPE (198 aa). Residues 19–26 form a G1 region; it reads GHVDHGKT. 19 to 26 contacts GTP; the sequence is GHVDHGKT. Threonine 26 contributes to the Mg(2+) binding site. A G2 region spans residues 63–67; it reads GITIN. The tract at residues 84–87 is G3; it reads DAPG. GTP is bound by residues 84-88 and 139-142; these read DAPGH and NKVD. The interval 139 to 142 is G4; that stretch reads NKVD. Positions 177 to 179 are G5; sequence SAL.

Belongs to the TRAFAC class translation factor GTPase superfamily. Classic translation factor GTPase family. EF-Tu/EF-1A subfamily. In terms of assembly, monomer.

Its subcellular location is the cytoplasm. It carries out the reaction GTP + H2O = GDP + phosphate + H(+). In terms of biological role, GTP hydrolase that promotes the GTP-dependent binding of aminoacyl-tRNA to the A-site of ribosomes during protein biosynthesis. This chain is Elongation factor Tu, found in Streptococcus sanguinis (strain SK36).